Here is an 83-residue protein sequence, read N- to C-terminus: DNA-directed RNA polymerase subunit Rpo5 (83 aa).

Belongs to the archaeal Rpo5/eukaryotic RPB5 RNA polymerase subunit family. As to quaternary structure, part of the RNA polymerase complex.

The protein localises to the cytoplasm. It catalyses the reaction RNA(n) + a ribonucleoside 5'-triphosphate = RNA(n+1) + diphosphate. Functionally, DNA-dependent RNA polymerase (RNAP) catalyzes the transcription of DNA into RNA using the four ribonucleoside triphosphates as substrates. The protein is DNA-directed RNA polymerase subunit Rpo5 of Metallosphaera sedula (strain ATCC 51363 / DSM 5348 / JCM 9185 / NBRC 15509 / TH2).